The sequence spans 323 residues: tRNA U34 carboxymethyltransferase (323 aa).

Carboxy-S-adenosyl-L-methionine-binding positions include Lys-91, Trp-105, Lys-110, Gly-130, 181–182 (IE), Met-196, Tyr-200, and Arg-315.

The protein belongs to the class I-like SAM-binding methyltransferase superfamily. CmoB family. Homotetramer.

It carries out the reaction carboxy-S-adenosyl-L-methionine + 5-hydroxyuridine(34) in tRNA = 5-carboxymethoxyuridine(34) in tRNA + S-adenosyl-L-homocysteine + H(+). Its function is as follows. Catalyzes carboxymethyl transfer from carboxy-S-adenosyl-L-methionine (Cx-SAM) to 5-hydroxyuridine (ho5U) to form 5-carboxymethoxyuridine (cmo5U) at position 34 in tRNAs. This Yersinia pseudotuberculosis serotype O:3 (strain YPIII) protein is tRNA U34 carboxymethyltransferase.